The primary structure comprises 375 residues: Probable pectin lyase C (375 aa).

Residues 1-20 form the signal peptide; it reads MKITSTIPAVLLGLAPLSAA. Intrachain disulfides connect C83-C100 and C92-C220. Residue R250 is part of the active site. C317 and C325 form a disulfide bridge.

The protein belongs to the polysaccharide lyase 1 family.

Its subcellular location is the secreted. The catalysed reaction is Eliminative cleavage of (1-&gt;4)-alpha-D-galacturonan methyl ester to give oligosaccharides with 4-deoxy-6-O-methyl-alpha-D-galact-4-enuronosyl groups at their non-reducing ends.. In terms of biological role, pectinolytic enzymes consist of four classes of enzymes: pectin lyase, polygalacturonase, pectin methylesterase and rhamnogalacturonase. Among pectinolytic enzymes, pectin lyase is the most important in depolymerization of pectin, since it cleaves internal glycosidic bonds of highly methylated pectins. The polypeptide is Probable pectin lyase C (pelC) (Aspergillus oryzae (strain ATCC 42149 / RIB 40) (Yellow koji mold)).